A 253-amino-acid polypeptide reads, in one-letter code: Pro-opiomelanocortin A (253 aa).

Residues 1–21 form the signal peptide; that stretch reads MLCPAWLLAVAVVGVVRGVKG. Gln-22 is subject to Pyrrolidone carboxylic acid. Intrachain disulfides connect Cys-23/Cys-45 and Cys-29/Cys-41. Residue Ser-104 is modified to N-acetylserine; in Corticotropin. Val-116 carries the valine amide modification. The segment at 228–253 is disordered; it reads QKREQWGREEGEEKRALGERKYHFQG. At Gln-252 the chain carries Glutamine amide; partial.

Belongs to the POMC family. Specific enzymatic cleavages at paired basic residues yield the different active peptides. Post-translationally, acetylation of beta-endorphin occurs in a tissue-specific manner. In terms of tissue distribution, C-terminal peptide 1 and C-terminal peptide 2 are detected in the anterior part of the nucleus lateralis tuberis of hypothalamus, in dorsal hypothalamus, thalamus, telencephalon, optic tectum and medulla oblongata (at protein level). Expressed in pituitary and hypothalamus of adult diploid animals, and hypothalamus of triploid and ovulated female trout.

The protein resides in the secreted. Stimulates the adrenal glands to release cortisol. Functionally, melanocyte-stimulating hormone alpha: Anorexigenic peptide. Increases the pigmentation of skin by increasing melanin production in melanocytes. Its function is as follows. Melanocyte-stimulating hormone beta: Increases the pigmentation of skin by increasing melanin production in melanocytes. In terms of biological role, beta-endorphin: Endogenous orexigenic opiate. Endogenous opiate. The sequence is that of Pro-opiomelanocortin A (pomca) from Oncorhynchus mykiss (Rainbow trout).